Reading from the N-terminus, the 484-residue chain is MSLEDKFDSLSVSQGASDHINNQLLEKYSHKIKTDELSFSRAKTSKDKANRATVENVLDPRTMRFLKSMVTRGVIADLNGCLSTGKEANVYHAFAGTGKAPVIDEETGQYEVLETDGSRAEYAIKIYKTSILVFKDRERYVDGEFRFRNSRSQHNPRKMIKIWAEKEFRNLKRIYQSGVIPAPKPIEVKNNVLVMEFLSRGNGFASPKLKDYPYKNRDEIFHYYHTMVAYMRLLYQVCRLVHADLSEYNTIVHDDKLYMIDVSQSVEPEHPMSLDFLRMDIKNVNLYFEKMGISIFPERVIFQFVISETLEKFKGDYNNISALVAYIASNLPIKSTEQDEAEDEIFRSLHLVRSLGGLEERDFDRYTDGKFDLLKSLIAHDNERNFAASEQFEFDNADHECSSGTEEFSDDEEDGSSGSEEDDEEEGEYYDDDEPKVLKGKKHEDKDLKKLRKQEAKDAKREKRKTKVKKHIKKKLVKKTKSKK.

The region spanning 76–402 is the Protein kinase domain; sequence ADLNGCLSTG…EFDNADHECS (327 aa). The ATP site is built by Lys125 and Leu198. Residue Asp244 is the Proton acceptor of the active site. Residues Asn249 and Asp261 each contribute to the Mg(2+) site. The 4-aspartylphosphate intermediate role is filled by Asp261. Positions 398–484 are disordered; that stretch reads DHECSSGTEE…KLVKKTKSKK (87 aa). Phosphoserine; by CK2 occurs at positions 402, 403, 409, 416, 417, and 419. The interval 403 to 484 is interaction with CKA2; sequence SGTEEFSDDE…KLVKKTKSKK (82 aa). Residues 407 to 434 are compositionally biased toward acidic residues; the sequence is EFSDDEEDGSSGSEEDDEEEGEYYDDDE. The interval 440-484 is association with (pre-)40S ribosomal subunit; that stretch reads GKKHEDKDLKKLRKQEAKDAKREKRKTKVKKHIKKKLVKKTKSKK. Residues 442–461 are compositionally biased toward basic and acidic residues; sequence KHEDKDLKKLRKQEAKDAKR. A compositionally biased stretch (basic residues) spans 462 to 484; that stretch reads EKRKTKVKKHIKKKLVKKTKSKK.

Belongs to the protein kinase superfamily. RIO-type Ser/Thr kinase family. As to quaternary structure, interacts with CKA2. The cofactor is Mg(2+). In terms of processing, autophosphorylated. Phosphorylated by casein kinase II (CK2). Phosphorylation by CK2 stimulates RIO1 kinase activity and targets it for degradation at the G1/S transition of the cell cycle.

Its subcellular location is the cytoplasm. The catalysed reaction is L-seryl-[protein] + ATP = O-phospho-L-seryl-[protein] + ADP + H(+). It carries out the reaction L-threonyl-[protein] + ATP = O-phospho-L-threonyl-[protein] + ADP + H(+). The enzyme catalyses ATP + H2O = ADP + phosphate + H(+). In terms of biological role, required for the final endonucleolytic cleavage at site D converting 20S pre-rRNA into the mature 18S rRNA. Required for the final steps of cytoplasmic maturation of the 40S ribosomal subunit. The association with the very late 40S subunit intermediate seems to follow RIO2 association with precursors of the 40S subunit and may involve a translation-like checkpoint point cycle preceeding the binding to the 60S ribosomal subunit. Despite the protein kinase domain is proposed to act predominantly as an ATPase. The catalytic activity regulates its dynamic association with the 40S subunit. Has a role in the cell cycle where it is required for entrance into S-phase and in the control of the onset of anaphase. Appears to also be involved in the maintenance of chromosome stability and correct mitotic segregation. In Saccharomyces cerevisiae (strain ATCC 204508 / S288c) (Baker's yeast), this protein is Serine/threonine-protein kinase RIO1 (RIO1).